The primary structure comprises 752 residues: MSFIDPYQHIIVEHQYSHKFTVVVLRATKVTKGTFGDMLDTPDPYVELFISTTPDSRKRTRHFNNDINPVWNETFEFILDPNQENVLEITLMDANYVMDETLGTATFPVSSMKVGEKKEVPFIFNQVTEMILEMSLEVCSCPDLRFSMALCDQEKTFRRQRKENIKENMKKLLGPKKSEGLYSTRDVPVVAILGSGGGFRAMVGFSGVMKALYESGILDCATYVAGLSGSTWYMSTLYSHPDFPEKGPEEINEELMKNVSHNPLLLLTPQKVKRYVESLWKKKSSGQPVTFTDIFGMLIGETLIQNRMSTTLSSLKEKVSAARCPLPLFTCLHVKPDVSELMFADWVEFSPYEIGMAKYGTFMTPDLFGSKFFMGTVVKKYEENPLHFLMGVWGSAFSILFNRVLGVSGSQNKGSTMEEELENITAKHIVSNDSSDSDDEAQGPKGTENEDAEREYQNDNQASWVHRMLMALVSDSALFNTREGRAGKEHNFMLGLNLNTSYPLSPLRDFSPQDSFDDDELDAAVADPDEFERIYEPLDVKSKKIHVVDSGLTFNLPYPLILRPQRGVDLIISFDFSARPSDTSPPFKELLLAEKWAKMNKLPFPKIDPYVFDREGLKECYVFKPKNPDVEKDCPTIIHFVLANINFRKYKAPGVLRETKEEKEIADFDIFDDPESPFSTFNFQYPNQAFKRLHDLMYFNTLNNIDVIKDAIVESIEYRRQNPSRCSVSLSNVEARKFFNKEFLSKPTAESI.

Residues 1-178 (MSFIDPYQHI…MKKLLGPKKS (178 aa)) form a phospholipid binding region. Ser2 bears the Phosphoserine mark. Residues 6 to 122 (PYQHIIVEHQ…KVGEKKEVPF (117 aa)) form the C2 domain. Positions 40, 41, 43, 65, 93, 94, and 95 each coordinate Ca(2+). The 601-residue stretch at 140-740 (SCPDLRFSMA…SNVEARKFFN (601 aa)) folds into the PLA2c domain. The active-site Nucleophile is the Ser228. Thr268 bears the Phosphothreonine mark. The disordered stretch occupies residues 427 to 457 (KHIVSNDSSDSDDEAQGPKGTENEDAEREYQ). Residues Ser434, Ser435, and Ser437 each carry the phosphoserine modification. A Phosphoserine; by MAPK modification is found at Ser505. Ser511 and Ser515 each carry phosphoserine. Lys541 participates in a covalent cross-link: Glycyl lysine isopeptide (Lys-Gly) (interchain with G-Cter in SUMO2). Asp549 serves as the catalytic Proton acceptor. Lys606 is covalently cross-linked (Glycyl lysine isopeptide (Lys-Gly) (interchain with G-Cter in SUMO2)). Residues Ser727 and Ser729 each carry the phosphoserine modification.

In terms of assembly, interacts with KAT5. Post-translationally, phosphorylated at both Ser-505 and Ser-727 in response to mitogenic stimuli. In terms of tissue distribution, in brain tissue, expressed in low levels in olfactory mitral and granule cells, in hippocampal pyramidal cells and in dentate and cerebellar granule cells.

The protein resides in the cytoplasm. Its subcellular location is the golgi apparatus membrane. It is found in the nucleus envelope. It carries out the reaction a 1,2-diacyl-sn-glycero-3-phosphocholine + H2O = a 1-acyl-sn-glycero-3-phosphocholine + a fatty acid + H(+). The enzyme catalyses a 1-O-alkyl-2-acyl-sn-glycero-3-phosphocholine + H2O = a 1-O-alkyl-sn-glycero-3-phosphocholine + a fatty acid + H(+). The catalysed reaction is a 1-acyl-sn-glycero-3-phosphocholine + H2O = sn-glycerol 3-phosphocholine + a fatty acid + H(+). It catalyses the reaction 1-hexadecanoyl-2-(5Z,8Z,11Z,14Z-eicosatetraenoyl)-sn-glycero-3-phosphocholine + H2O = 1-hexadecanoyl-sn-glycero-3-phosphocholine + (5Z,8Z,11Z,14Z)-eicosatetraenoate + H(+). It carries out the reaction 1,2-di-(5Z,8Z,11Z,14Z-eicosatetraenoyl)-sn-glycero-3-phosphocholine + H2O = 1-(5Z,8Z,11Z,14Z-eicosatetraenoyl)-sn-glycero-3-phosphocholine + (5Z,8Z,11Z,14Z)-eicosatetraenoate + H(+). The enzyme catalyses 1-octadecanoyl-2-(5Z,8Z,11Z,14Z-eicosatetraenoyl)-sn-glycero-3-phosphocholine + H2O = 1-octadecanoyl-sn-glycero-3-phosphocholine + (5Z,8Z,11Z,14Z)-eicosatetraenoate + H(+). The catalysed reaction is 1-hexadecanoyl-2-(9Z,12Z-octadecadienoyl)-sn-glycero-3-phosphocholine + H2O = (9Z,12Z)-octadecadienoate + 1-hexadecanoyl-sn-glycero-3-phosphocholine + H(+). It catalyses the reaction 1-octadecanoyl-2-(9Z,12Z,15Z-octadecatrienoyl)-sn-glycero-3-phosphocholine + H2O = (9Z,12Z,15Z)-octadecatrienoate + 1-octadecanoyl-sn-glycero-3-phosphocholine + H(+). It carries out the reaction 1-(5Z,8Z,11Z,14Z-eicosatetraenoyl)-2-hexadecanoyl-sn-glycero-3-phosphocholine + H2O = 1-(5Z,8Z,11Z,14Z-eicosatetraenoyl)-sn-glycero-3-phosphocholine + hexadecanoate + H(+). The enzyme catalyses 1-O-hexadecyl-2-(5Z,8Z,11Z,14Z)-eicosatetraenoyl-sn-glycero-3-phosphocholine + H2O = 1-O-hexadecyl-sn-glycero-3-phosphocholine + (5Z,8Z,11Z,14Z)-eicosatetraenoate + H(+). The catalysed reaction is 1,2-di-(9Z-octadecenoyl)-sn-glycero-3-phospho-(1'-sn-glycerol) + H2O = 1-(9Z-octadecenoyl)-sn-glycero-3-phospho-(1'-sn-glycerol) + (9Z)-octadecenoate + H(+). It catalyses the reaction 1-octadecanoyl-2-(5Z,8Z,11Z,14Z-eicosatetraenoyl)-sn-glycero-3-phosphate + H2O = 1-octadecanoyl-sn-glycero-3-phosphate + (5Z,8Z,11Z,14Z)-eicosatetraenoate + H(+). It carries out the reaction 1-hexadecanoyl-sn-glycero-3-phosphocholine + H2O = sn-glycerol 3-phosphocholine + hexadecanoate + H(+). The enzyme catalyses 2-(prostaglandin E2)-sn-glycero-3-phosphoethanolamine + H2O = sn-glycero-3-phosphoethanolamine + prostaglandin E2 + H(+). The catalysed reaction is 2-[(15S)-hydroxy-(5Z,8Z,11Z,13E)-eicosatetraenoyl]-sn-glycero-3-phosphocholine + H2O = (15S)-hydroxy-(5Z,8Z,11Z,13E)-eicosatetraenoate + sn-glycerol 3-phosphocholine + H(+). It catalyses the reaction 2-[(15R)-hydroxy-(5Z,8Z,11Z,13E)-eicosatetraenoyl]-sn-glycero-3-phosphocholine + H2O = (15R)-hydroxy-(5Z,8Z,11Z,13E)-eicosatetraenoate + sn-glycerol 3-phosphocholine + H(+). It carries out the reaction 2-(prostaglandin E2)-sn-glycero-3-phosphocholine + H2O = prostaglandin E2 + sn-glycerol 3-phosphocholine + H(+). The enzyme catalyses 2-[(11R)-hydroxy-(5Z,8Z,12E,14Z)-eicosatetraenoyl]-sn-glycero-3-phosphocholine + H2O = (11R)-hydroxy-(5Z,8Z,12E,14Z)-eicosatetraenoate + sn-glycerol 3-phosphocholine + H(+). The catalysed reaction is 1-(5Z,8Z,11Z,14Z-eicosatetraenoyl)-2-O-hexadecyl-sn-glycero-3-phosphocholine + H2O = 2-O-hexadecyl-sn-glycero-3-phosphocholine + (5Z,8Z,11Z,14Z)-eicosatetraenoate + H(+). It catalyses the reaction 1-octadecanoyl-2-(5Z,8Z,11Z,14Z-eicosatetraenoyl)-sn-glycero-3-phosphocholine + glycerol = 1-(5Z,8Z,11Z,14Z-eicosatetraenoyl)-glycerol + 1-octadecanoyl-sn-glycero-3-phosphocholine. It carries out the reaction 1-octadecanoyl-2-(9Z,12Z,15Z-octadecatrienoyl)-sn-glycero-3-phosphocholine + glycerol = 1-(9Z,12Z,15Z-octadecatrienoyl)-glycerol + 1-octadecanoyl-sn-glycero-3-phosphocholine. It functions in the pathway lipid metabolism; arachidonate metabolism. The protein operates within membrane lipid metabolism; glycerophospholipid metabolism. It participates in lipid metabolism; prostaglandin biosynthesis. Its pathway is lipid metabolism; leukotriene B4 biosynthesis. With respect to regulation, activated by cytosolic calcium, which is necessary for binding to membrane lipids. Activated by phosphorylation in response to mitogenic stimuli. Its function is as follows. Has primarily calcium-dependent phospholipase and lysophospholipase activities, with a major role in membrane lipid remodeling and biosynthesis of lipid mediators of the inflammatory response. Plays an important role in embryo implantation and parturition through its ability to trigger prostanoid production. Preferentially hydrolyzes the ester bond of the fatty acyl group attached at sn-2 position of phospholipids (phospholipase A2 activity). Selectively hydrolyzes sn-2 arachidonoyl group from membrane phospholipids, providing the precursor for eicosanoid biosynthesis via the cyclooxygenase pathway. In an alternative pathway of eicosanoid biosynthesis, hydrolyzes sn-2 fatty acyl chain of eicosanoid lysophopholipids to release free bioactive eicosanoids. Hydrolyzes the ester bond of the fatty acyl group attached at sn-1 position of phospholipids (phospholipase A1 activity) only if an ether linkage rather than an ester linkage is present at the sn-2 position. This hydrolysis is not stereospecific. Has calcium-independent phospholipase A2 and lysophospholipase activities in the presence of phosphoinositides. Has O-acyltransferase activity. Catalyzes the transfer of fatty acyl chains from phospholipids to a primary hydroxyl group of glycerol (sn-1 or sn-3), potentially contributing to monoacylglycerol synthesis. In Rattus norvegicus (Rat), this protein is Cytosolic phospholipase A2 (Pla2g4a).